We begin with the raw amino-acid sequence, 348 residues long: VIP36-like protein (348 aa).

A signal peptide spans 1–44; that stretch reads MAATLGPLGSWQQWRRCLSARDGSRMLLLLLLLGSGQGPQQVGA. At 45-313 the chain is on the lumenal side; sequence GQTFEYLKRE…APLPPLSGLA (269 aa). One can recognise an L-type lectin-like domain in the interval 49-274; it reads EYLKREHSLS…DVISLKLFEL (226 aa). Residues Ser-93 and Asp-128 each coordinate a carbohydrate. Ca(2+) contacts are provided by Asp-159, Tyr-161, and Asn-163. Position 161–163 (161–163) interacts with a carbohydrate; sequence YPN. N-linked (GlcNAc...) (high mannose) asparagine glycosylation occurs at Asn-181. Position 188 (His-188) interacts with a carbohydrate. Asp-191 provides a ligand contact to Ca(2+). Residues Cys-200 and Cys-237 are joined by a disulfide bond. Residue 258–260 participates in a carbohydrate binding; sequence GDL. The helical transmembrane segment at 314-336 threads the bilayer; sequence LFLIVFFSLVFSVFAIVIGIILY. Residues 337 to 348 lie on the Cytoplasmic side of the membrane; the sequence is NKWQEQSRKRFY. The short motif at 344-346 is the Endoplasmic reticulum retention signal element; it reads RKR.

As to expression, expressed in numerous tissues. Highest expression in skeletal muscle and kidney, intermediate levels in heart, liver and placenta, low levels in brain, thymus, spleen, small intestine and lung.

It localises to the endoplasmic reticulum membrane. The protein localises to the golgi apparatus membrane. Its function is as follows. May be involved in the regulation of export from the endoplasmic reticulum of a subset of glycoproteins. May function as a regulator of ERGIC-53. This chain is VIP36-like protein (LMAN2L), found in Homo sapiens (Human).